Consider the following 479-residue polypeptide: Glutamate--tRNA ligase (479 aa).

A 'HIGH' region motif is present at residues 21–31; it reads PSPTGYLHVGG. A 'KMSKS' region motif is present at residues 248-252; that stretch reads KLSKR. Lys-251 lines the ATP pocket.

The protein belongs to the class-I aminoacyl-tRNA synthetase family. Glutamate--tRNA ligase type 1 subfamily. In terms of assembly, monomer.

The protein resides in the cytoplasm. It carries out the reaction tRNA(Glu) + L-glutamate + ATP = L-glutamyl-tRNA(Glu) + AMP + diphosphate. Functionally, catalyzes the attachment of glutamate to tRNA(Glu) in a two-step reaction: glutamate is first activated by ATP to form Glu-AMP and then transferred to the acceptor end of tRNA(Glu). The polypeptide is Glutamate--tRNA ligase (Actinobacillus pleuropneumoniae serotype 7 (strain AP76)).